A 157-amino-acid chain; its full sequence is SUMO-conjugating enzyme UBC9 (157 aa).

At serine 2 the chain carries N-acetylserine. The UBC core domain occupies leucine 4–lysine 157. The Glycyl thioester intermediate role is filled by cysteine 93.

Belongs to the ubiquitin-conjugating enzyme family. As to quaternary structure, interacts with SIZ1.

It localises to the nucleus. It participates in protein modification; protein sumoylation. Its function is as follows. E2 ubiquitin-like--protein ligase mediating SUMO/Smt3 attachment to septins and PCNA. Seems to be involved in degradation of S- (CLB5) and M-phase cyclins (CLB2). The sequence is that of SUMO-conjugating enzyme UBC9 (UBC9) from Saccharomyces cerevisiae (strain ATCC 204508 / S288c) (Baker's yeast).